The chain runs to 229 residues: Orotate phosphoribosyltransferase (229 aa).

5-phospho-alpha-D-ribose 1-diphosphate-binding positions include R107, K108, K111, H113, and 133-141; that span reads EDLTTAGGS. T137 contributes to the orotate binding site.

The protein belongs to the purine/pyrimidine phosphoribosyltransferase family. PyrE subfamily. Homodimer. Mg(2+) is required as a cofactor.

It carries out the reaction orotidine 5'-phosphate + diphosphate = orotate + 5-phospho-alpha-D-ribose 1-diphosphate. The protein operates within pyrimidine metabolism; UMP biosynthesis via de novo pathway; UMP from orotate: step 1/2. In terms of biological role, catalyzes the transfer of a ribosyl phosphate group from 5-phosphoribose 1-diphosphate to orotate, leading to the formation of orotidine monophosphate (OMP). This chain is Orotate phosphoribosyltransferase, found in Rhizobium johnstonii (strain DSM 114642 / LMG 32736 / 3841) (Rhizobium leguminosarum bv. viciae).